Here is a 930-residue protein sequence, read N- to C-terminus: Isoleucine--tRNA ligase (930 aa).

The 'HIGH' region motif lies at 57-67 (PYANGNIHVGH). Residue Glu-554 coordinates L-isoleucyl-5'-AMP. The 'KMSKS' region signature appears at 595–599 (KMSKS). Residue Lys-598 participates in ATP binding. 4 residues coordinate Zn(2+): Cys-888, Cys-891, Cys-908, and Cys-911.

Belongs to the class-I aminoacyl-tRNA synthetase family. IleS type 1 subfamily. In terms of assembly, monomer. The cofactor is Zn(2+).

The protein localises to the cytoplasm. The catalysed reaction is tRNA(Ile) + L-isoleucine + ATP = L-isoleucyl-tRNA(Ile) + AMP + diphosphate. In terms of biological role, catalyzes the attachment of isoleucine to tRNA(Ile). As IleRS can inadvertently accommodate and process structurally similar amino acids such as valine, to avoid such errors it has two additional distinct tRNA(Ile)-dependent editing activities. One activity is designated as 'pretransfer' editing and involves the hydrolysis of activated Val-AMP. The other activity is designated 'posttransfer' editing and involves deacylation of mischarged Val-tRNA(Ile). This chain is Isoleucine--tRNA ligase, found in Streptococcus pneumoniae (strain JJA).